A 323-amino-acid polypeptide reads, in one-letter code: DNA-directed RNA polymerase subunit alpha 1 (323 aa).

The tract at residues 1 to 228 (MSNNNSKQEF…EQISVFVSLR (228 aa)) is alpha N-terminal domain (alpha-NTD). Residues 244–323 (IDPILLKPID…DNFRELVEGK (80 aa)) form an alpha C-terminal domain (alpha-CTD) region.

This sequence belongs to the RNA polymerase alpha chain family. As to quaternary structure, homodimer. The RNAP catalytic core consists of 2 alpha, 1 beta, 1 beta' and 1 omega subunit. When a sigma factor is associated with the core the holoenzyme is formed, which can initiate transcription.

The enzyme catalyses RNA(n) + a ribonucleoside 5'-triphosphate = RNA(n+1) + diphosphate. Its function is as follows. DNA-dependent RNA polymerase catalyzes the transcription of DNA into RNA using the four ribonucleoside triphosphates as substrates. In Francisella tularensis subsp. novicida (strain U112), this protein is DNA-directed RNA polymerase subunit alpha 1.